The chain runs to 135 residues: ATP synthase epsilon chain (135 aa).

It belongs to the ATPase epsilon chain family. As to quaternary structure, F-type ATPases have 2 components, CF(1) - the catalytic core - and CF(0) - the membrane proton channel. CF(1) has five subunits: alpha(3), beta(3), gamma(1), delta(1), epsilon(1). CF(0) has three main subunits: a, b and c.

It localises to the cell inner membrane. Produces ATP from ADP in the presence of a proton gradient across the membrane. The chain is ATP synthase epsilon chain from Granulibacter bethesdensis (strain ATCC BAA-1260 / CGDNIH1).